We begin with the raw amino-acid sequence, 406 residues long: Sorting nexin-6 (406 aa).

An N-acetylmethionine modification is found at methionine 1. An N-acetylmethionine; in Sorting nexin-6, N-terminally processed modification is found at methionine 2. Positions 2-179 (MEGLDDGPDF…NQDLSVRGKN (178 aa)) are interaction with PIM1. A PX domain is found at 26–173 (LQSDAALQVD…HVFLEYNQDL (148 aa)). Residues 41-47 (SERDKVK), 100-106 (FDASREK), and 114-117 (EGSM) contribute to the a 1,2-diacyl-sn-glycero-3-phospho-(1D-myo-inositol-4,5-bisphosphate) site. 2 positions are modified to phosphoserine: serine 116 and serine 194. The tract at residues 182–199 (EKLEDFFKNMVKSADGVI) is membrane-binding amphipathic helix. Residues 203 to 406 (VKDVDDFFEH…NCLAVLNGDT (204 aa)) enclose the BAR domain.

Belongs to the sorting nexin family. In terms of assembly, forms heterodimers with BAR domain-containing sorting nexins SNX1 and SNX2. The heterodimers are proposed to self-assemble into helical arrays on the membrane to stabilize and expand local membrane curvature underlying endosomal tubule formation. Thought to be a component of the originally described retromer complex (also called SNX-BAR retromer) which is a pentamer containing the heterotrimeric retromer cargo-selective complex (CSC), also described as vacuolar protein sorting subcomplex (VPS), and a heterodimeric membrane-deforming subcomplex formed between SNX1 or SNX2 and SNX5 or SNX6 (also called SNX-BAR subcomplex); the respective CSC and SNX-BAR subcomplexes associate with low affinity. Interacts with SNX1, SNX2, VPS26A, VPS29, VPS35, CDKN1B, TGFB receptors, BACE1, BRMS1, PIP5K1C isoform 3. Interacts with DCTN1; the association with DCTN1 is involved in movement of retromer-c ontaining vesicles toward the TGN. Interacts with CDKN1B and GIT1. Interacts with PIM1; translocating SNX6 to the nucleus. Post-translationally, in vitro phosphorylated by PIM1; not affecting PIM1-dependent nuclear translocation.

It localises to the early endosome. Its subcellular location is the early endosome membrane. The protein resides in the cytoplasmic vesicle. It is found in the cytoplasm. The protein localises to the nucleus. Its function is as follows. Involved in several stages of intracellular trafficking. Interacts with membranes phosphatidylinositol 3,4-bisphosphate and/or phosphatidylinositol 4,5-bisphosphate. Acts in part as component of the retromer membrane-deforming SNX-BAR subcomplex. The SNX-BAR retromer mediates retrograde transport of cargo proteins from endosomes to the trans-Golgi network (TGN) and is involved in endosome-to-plasma membrane transport for cargo protein recycling. The SNX-BAR subcomplex functions to deform the donor membrane into a tubular profile called endosome-to-TGN transport carrier (ETC). Does not have in vitro vesicle-to-membrane remodeling activity. Involved in retrograde endosome-to-TGN transport of lysosomal enzyme receptor IGF2R. May function as link between transport vesicles and dynactin. Negatively regulates retrograde transport of BACE1 from the cell surface to the trans-Golgi network. Involved in E-cadherin sorting and degradation; inhibits PIP5K1C isoform 3-mediated E-cadherin degradation. In association with GIT1 involved in EGFR degradation. Promotes lysosomal degradation of CDKN1B. May contribute to transcription regulation. This is Sorting nexin-6 (SNX6) from Homo sapiens (Human).